A 295-amino-acid chain; its full sequence is MAVSSTPWALVALFLMASSTVMAIPPRKAIDVPFGRNYVPTWAFDHQKQLNGGSELQLILDKYTGTGFQSKGSYLFGHFSMHIKLPAGDTAGVVTAFYLSSTNNEHDEIDFEFLGNRTGQPVILQTNVFTGGKGNREQRIYLWFDPSKAYHTYSVLWNLYQIVFFVDNIPIRVFKNAKDLGVRFPFNQPMKLYSSLWNADDWATRGGLEKTNWANAPFIASYRGFHIDGCQASVEAKYCATQGRMWWDQNEFRDLDAEQYRRLKWVRMKWTIYNYCTDRTRFPVMPAECRRDRDV.

The signal sequence occupies residues 1–23 (MAVSSTPWALVALFLMASSTVMA). Residues 25–222 (PPRKAIDVPF…WANAPFIASY (198 aa)) enclose the GH16 domain. The Nucleophile role is filled by E108. The Proton donor role is filled by E112. E112 contributes to the xyloglucan binding site. N116 is a glycosylation site (N-linked (GlcNAc...) asparagine). Xyloglucan contacts are provided by residues 125–127 (QTN), 135–137 (NRE), 201–202 (DW), and G206. 2 disulfide bridges follow: C230–C239 and C276–C289. R281 contacts xyloglucan.

This sequence belongs to the glycosyl hydrolase 16 family. XTH group 1 subfamily. Post-translationally, contains at least one intrachain disulfide bond essential for its enzymatic activity. In terms of processing, the N-glycan consists of an (GlcNAc)2(Hex)6 oligosaccharide; not essential for its enzymatic activity.

Its subcellular location is the secreted. The protein resides in the cell wall. It localises to the extracellular space. It is found in the apoplast. The catalysed reaction is breaks a beta-(1-&gt;4) bond in the backbone of a xyloglucan and transfers the xyloglucanyl segment on to O-4 of the non-reducing terminal glucose residue of an acceptor, which can be a xyloglucan or an oligosaccharide of xyloglucan.. In terms of biological role, catalyzes xyloglucan endohydrolysis (XEH) and/or endotransglycosylation (XET). Cleaves and religates xyloglucan polymers, an essential constituent of the primary cell wall, and thereby participates in cell wall construction of growing tissues. In Brassica oleracea var. botrytis (Cauliflower), this protein is Xyloglucan endotransglucosylase/hydrolase (XET16A).